The chain runs to 296 residues: Acetylglutamate kinase (296 aa).

Substrate contacts are provided by residues 65 to 66, arginine 87, and asparagine 190; that span reads GG.

It belongs to the acetylglutamate kinase family. ArgB subfamily.

Its subcellular location is the cytoplasm. The enzyme catalyses N-acetyl-L-glutamate + ATP = N-acetyl-L-glutamyl 5-phosphate + ADP. Its pathway is amino-acid biosynthesis; L-arginine biosynthesis; N(2)-acetyl-L-ornithine from L-glutamate: step 2/4. Its function is as follows. Catalyzes the ATP-dependent phosphorylation of N-acetyl-L-glutamate. This is Acetylglutamate kinase from Moorella thermoacetica (strain ATCC 39073 / JCM 9320).